Consider the following 42-residue polypeptide: Hemoglobin subunit beta-A (42 aa).

In terms of domain architecture, Globin spans 2–42 (EWTDAERSAILSLWGKIDTDELGPALLARLXLVXXXTQRYF).

This sequence belongs to the globin family. Heterotetramer of two alpha chains and two beta chains. As to expression, red blood cells.

Involved in oxygen transport from gills to the various peripheral tissues. This is Hemoglobin subunit beta-A from Catostomus clarkii (Desert sucker).